The sequence spans 358 residues: Alanine racemase (358 aa).

Residue Lys-35 is the Proton acceptor; specific for D-alanine of the active site. Lys-35 is modified (N6-(pyridoxal phosphate)lysine). A substrate-binding site is contributed by Arg-130. The active-site Proton acceptor; specific for L-alanine is the Tyr-255. Met-303 serves as a coordination point for substrate.

It belongs to the alanine racemase family. Pyridoxal 5'-phosphate is required as a cofactor.

It catalyses the reaction L-alanine = D-alanine. The protein operates within amino-acid biosynthesis; D-alanine biosynthesis; D-alanine from L-alanine: step 1/1. Functionally, catalyzes the interconversion of L-alanine and D-alanine. May also act on other amino acids. The sequence is that of Alanine racemase (alr) from Shewanella sediminis (strain HAW-EB3).